Reading from the N-terminus, the 389-residue chain is Probable acyl-CoA dehydrogenase fadE25 (389 aa).

The protein belongs to the acyl-CoA dehydrogenase family. It depends on FAD as a cofactor.

It carries out the reaction a 2,3-saturated acyl-CoA + A = a 2,3-dehydroacyl-CoA + AH2. In Mycobacterium bovis (strain ATCC BAA-935 / AF2122/97), this protein is Probable acyl-CoA dehydrogenase fadE25 (fadE25).